The following is a 489-amino-acid chain: Metal cation symporter ZIP14 (489 aa).

Positions 1–28 are cleaved as a signal peptide; the sequence is MKRLHPALPSCLLLVLFGIWRTAPQTHA. Over 29–155 the chain is Extracellular; it reads SSAGLPPLSA…PSAIEVWGYG (127 aa). 4 N-linked (GlcNAc...) asparagine glycosylation sites follow: Asn52, Asn75, Asn85, and Asn100. The helical transmembrane segment at 156–176 threads the bilayer; sequence FLCVTVISLCSLMGASVVPFM. Over 177–184 the chain is Cytoplasmic; that stretch reads KKTFYKRL. Residues 185-205 traverse the membrane as a helical segment; that stretch reads LLYFIALAIGTLYSNALFQLI. Topologically, residues 206–221 are extracellular; that stretch reads PEAFGFNPQDNYVSKS. Residues 222-242 form a helical membrane-spanning segment; the sequence is AVVFGGFYLFFFTEKILKMLL. Over 243-349 the chain is Cytoplasmic; sequence KQKNEHHHGH…SDGLHNFIDG (107 aa). Positions 248–255 match the HHHGHXHX-motif motif; it reads HHHGHNHF. A helical transmembrane segment spans residues 350–370; sequence LAIGASFTVSVFQGISTSVAI. Residues 371–394 are Extracellular-facing; it reads LCEEFPHELGDFVILLNAGMSIQQ. The short motif at 373–378 is the XEXPHE-motif element; sequence EEFPHE. A helical transmembrane segment spans residues 395–415; it reads ALFFNFLSACCCYLGLAFGIL. The Cytoplasmic portion of the chain corresponds to 416–421; the sequence is AGSHFS. A helical membrane pass occupies residues 422–442; that stretch reads ANWIFALAGGMFLYIALADMF. The Extracellular segment spans residues 443 to 457; sequence PEMNEVCQEDEKNDS. Residues 458–478 traverse the membrane as a helical segment; that stretch reads FLVPFVIQNLGLLTGFSIMLV. At 479–489 the chain is on the cytoplasmic side; sequence LTMYSGQIQIG.

Belongs to the ZIP transporter (TC 2.A.5) family. Homotrimer. Ubiquitinated. Ubiquitination occurs upon iron depletion. The ubiquitinated form undergoes proteasomal degradation. Post-translationally, N-glycosylated. N-glycosylation at Asn-100 is required for iron-regulated extraction of the transporter from membranes and subsequent proteasomal degradation. Widely expressed. Highly and transiently expressed during the early stage of adipocyte differentiation. Strongly expressed in liver, preadipocyte, duodenum and jejunum, moderately in brain, heart, skeletal muscle, spleen, pancreas, kidney and white adipose cells. Expression is almost undetectable in lung, testis and brown adipose cells. Expressed by chondrocytes and pituitary cells. In terms of tissue distribution, more strongly expressed in brain. As to expression, more strongly expressed in liver, kidney and duodenum.

Its subcellular location is the cell membrane. The protein resides in the apical cell membrane. It localises to the basolateral cell membrane. It is found in the early endosome membrane. The protein localises to the late endosome membrane. Its subcellular location is the lysosome membrane. It carries out the reaction Zn(2+)(out) + 2 hydrogencarbonate(out) = Zn(2+)(in) + 2 hydrogencarbonate(in). The catalysed reaction is Mn(2+)(out) + 2 hydrogencarbonate(out) = Mn(2+)(in) + 2 hydrogencarbonate(in). It catalyses the reaction Fe(2+)(out) + 2 hydrogencarbonate(out) = Fe(2+)(in) + 2 hydrogencarbonate(in). The enzyme catalyses Cd(2+)(out) + 2 hydrogencarbonate(out) = Cd(2+)(in) + 2 hydrogencarbonate(in). Its activity is regulated as follows. Inhibited by cyanide and therefore dependent of an energy source. Inhibited by DIDS/4,4'-diisothiocyanatostilbene-2,2'-disulfonic acid, an inhibitor hydrogencarbonate-dependent transporters. Electroneutral transporter of the plasma membrane mediating the cellular uptake of the divalent metal cations zinc, manganese and iron that are important for tissue homeostasis, metabolism, development and immunity. Functions as an energy-dependent symporter, transporting through the membranes an electroneutral complex composed of a divalent metal cation and two bicarbonate anions. Beside these endogenous cellular substrates, can also import cadmium a non-essential metal which is cytotoxic and carcinogenic. Controls the cellular uptake by the intestinal epithelium of systemic zinc, which is in turn required to maintain tight junctions and the intestinal permeability. Modifies the activity of zinc-dependent phosphodiesterases, thereby indirectly regulating G protein-coupled receptor signaling pathways important for gluconeogenesis and chondrocyte differentiation. Regulates insulin receptor signaling, glucose uptake, glycogen synthesis and gluconeogenesis in hepatocytes through the zinc-dependent intracellular catabolism of insulin. Through zinc cellular uptake also plays a role in the adaptation of cells to endoplasmic reticulum stress. Major manganese transporter of the basolateral membrane of intestinal epithelial cells, it plays a central role in manganese systemic homeostasis through intestinal manganese uptake. Also involved in manganese extracellular uptake by cells of the blood-brain barrier. May also play a role in manganese and zinc homeostasis participating in their elimination from the blood through the hepatobiliary excretion. Also functions in the extracellular uptake of free iron. May also function intracellularly and mediate the transport from endosomes to cytosol of iron endocytosed by transferrin. Plays a role in innate immunity by regulating the expression of cytokines by activated macrophages. In Mus musculus (Mouse), this protein is Metal cation symporter ZIP14.